Here is a 235-residue protein sequence, read N- to C-terminus: uncharacterized protein (235 aa).

It to B.subtilis YncM.

This is an uncharacterized protein from Bacillus subtilis (strain 168).